Reading from the N-terminus, the 667-residue chain is Beta-galactosidase LacZ (667 aa).

Residue Arg-109 coordinates substrate. Cys-113 is a binding site for Zn(2+). Residue Asn-147 participates in substrate binding. Glu-148 functions as the Proton donor in the catalytic mechanism. Residues Cys-153, Cys-155, and Cys-158 each contribute to the Zn(2+) site. Catalysis depends on Glu-307, which acts as the Nucleophile. Residues Trp-315 and 355-358 (EKFH) contribute to the substrate site.

Belongs to the glycosyl hydrolase 42 family.

It catalyses the reaction Hydrolysis of terminal non-reducing beta-D-galactose residues in beta-D-galactosides.. Catalyzes the hydrolysis of lactose to its constituent monosaccharides glucose and galactose. This Lactobacillus acidophilus (strain ATCC 700396 / NCK56 / N2 / NCFM) protein is Beta-galactosidase LacZ.